A 937-amino-acid polypeptide reads, in one-letter code: Beta-mannosidase A (937 aa).

Positions 1–23 (MRALPTTATTLLGVLFFPSASRS) are cleaved as a signal peptide. N-linked (GlcNAc...) asparagine glycosylation is found at N42, N82, N250, N285, N319, N329, and N350. The active-site Proton donor is E482. N553, N612, N743, and N796 each carry an N-linked (GlcNAc...) asparagine glycan.

Belongs to the glycosyl hydrolase 2 family. Beta-mannosidase A subfamily. In terms of assembly, homodimer. In terms of processing, N-glycosylated.

The protein localises to the secreted. The catalysed reaction is Hydrolysis of terminal, non-reducing beta-D-mannose residues in beta-D-mannosides.. It functions in the pathway glycan metabolism; N-glycan degradation. Its function is as follows. Exoglycosidase that cleaves the single beta-linked mannose residue from the non-reducing end of beta-mannosidic oligosaccharides of various complexity and length. Involved in the degradation of polymeric mannan and galactomannan. Releases the terminal mannose residue from mannotriose and is somewaht less active on other mannooligosaccharides. This Aspergillus aculeatus protein is Beta-mannosidase A (mndA).